The sequence spans 247 residues: T-cell surface glycoprotein CD8 alpha chain (247 aa).

Residues 1–27 (MASPLTRFLSLNLLLLGESIILGSGEA) form the signal peptide. Residues 28 to 139 (KPQAPELRIF…SVISNSVMYF (112 aa)) form the Ig-like V-type domain. The Extracellular segment spans residues 28–196 (KPQAPELRIF…TGLDFACDIY (169 aa)). Residues Cys53 and Cys129 are joined by a disulfide bond. N-linked (GlcNAc...) asparagine glycans are attached at residues Asn69, Asn97, and Asn150. A disordered region spans residues 156–182 (PVLRTPSPVHPTGTSQPQRPEDCRPRG). Residues 197–217 (IWAPLAGICVALLLSLIITLI) form a helical membrane-spanning segment. Residues 218–247 (CYHRSRKRVCKCPRPLVRQEGKPRPSEKIV) lie on the Cytoplasmic side of the membrane.

Forms disulfide-linked heterodimers with CD8B at the cell surface. Also forms homodimers in several cell types including NK-cells or peripheral blood T-lymphocytes. Interacts with the MHC class I HLA-A/B2M dimer. Interacts with LCK in a zinc-dependent manner. Palmitoylated, but association with CD8B seems to be more important for the enrichment of CdD8A in lipid rafts. Post-translationally, phosphorylated in cytotoxic T-lymphocytes (CTLs) following activation.

Its subcellular location is the cell membrane. Functionally, integral membrane glycoprotein that plays an essential role in the immune response and serves multiple functions in responses against both external and internal offenses. In T-cells, functions primarily as a coreceptor for MHC class I molecule:peptide complex. The antigens presented by class I peptides are derived from cytosolic proteins while class II derived from extracellular proteins. Interacts simultaneously with the T-cell receptor (TCR) and the MHC class I proteins presented by antigen presenting cells (APCs). In turn, recruits the Src kinase LCK to the vicinity of the TCR-CD3 complex. LCK then initiates different intracellular signaling pathways by phosphorylating various substrates ultimately leading to lymphokine production, motility, adhesion and activation of cytotoxic T-lymphocytes (CTLs). This mechanism enables CTLs to recognize and eliminate infected cells and tumor cells. In NK-cells, the presence of CD8A homodimers at the cell surface provides a survival mechanism allowing conjugation and lysis of multiple target cells. CD8A homodimer molecules also promote the survival and differentiation of activated lymphocytes into memory CD8 T-cells. The sequence is that of T-cell surface glycoprotein CD8 alpha chain (Cd8a) from Mus musculus (Mouse).